Here is a 300-residue protein sequence, read N- to C-terminus: MNQSYGRLVSRAAIAATAMASLLLLIKIFAWWYTGSVSILAALVDSLVDIGASLTNLLVVRYSLQPADDNHSFGHGKAESLAALAQSMFISGSALFLFLTGIQHLVSPTPMTDPGVGVIVTIVALICTIILVSFQRWVVRRTQSQAVRADMLHYQSDVMMNGAILLALGLSWYGWHRADALFALGIGIYILYSALRMGYEAVQSLLDRALPDEERQEIIGIVTSWPGVSGAHDLRTRQSGPTRFIQIHLEMEDSLPLVQAHMVADQVEQAILRRFPGSDVIIHQDPCSVVPREGKRSMLS.

A run of 4 helical transmembrane segments spans residues 12-32 (AAIA…FAWW), 39-59 (ILAA…NLLV), 82-102 (AALA…LTGI), and 114-134 (PGVG…LVSF). Residues aspartate 45 and aspartate 49 each coordinate Zn(2+). Histidine 153 and aspartate 157 together coordinate Zn(2+). 2 helical membrane passes run 156-176 (SDVM…YGWH) and 178-198 (ADAL…LRMG).

This sequence belongs to the cation diffusion facilitator (CDF) transporter (TC 2.A.4) family. FieF subfamily. In terms of assembly, homodimer.

It is found in the cell inner membrane. It carries out the reaction Zn(2+)(in) + H(+)(out) = Zn(2+)(out) + H(+)(in). It catalyses the reaction Cd(2+)(in) + H(+)(out) = Cd(2+)(out) + H(+)(in). The catalysed reaction is Fe(2+)(in) + H(+)(out) = Fe(2+)(out) + H(+)(in). Its function is as follows. Divalent metal cation transporter which exports Zn(2+), Cd(2+) and possibly Fe(2+). May be involved in zinc and iron detoxification by efflux. In Shigella flexneri serotype 5b (strain 8401), this protein is Cation-efflux pump FieF.